Here is a 445-residue protein sequence, read N- to C-terminus: DDB1- and CUL4-associated factor 13 (445 aa).

Position 49 is an N6-acetyllysine (Lys49). WD repeat units follow at residues 64–104, 107–146, 149–191, 194–234, 236–276, 280–319, and 323–362; these read GHRD…CIRT, AHEG…YGDE, PLHT…PICS, WGFD…PLKK, ILDM…TPVM, DHVS…SREV, and KRMQ…KLGV. The segment at 353 to 441 is required for nucleolar location; sequence KANASEKLGV…LVSEKKKHVV (89 aa).

Belongs to the WD repeat DCAF13/WDSOF1 family. In terms of assembly, part of the small subunit (SSU) processome, composed of more than 70 proteins and the RNA chaperone small nucleolar RNA (snoRNA) U3. Component of the DCX(DCAF13) E3 ubiquitin ligase complex, at least composed of CUL4 (CUL4A or CUL4B), DDB1, DCAF13 and RBX1. Interacts (via WD40 domain) with DDB1. Interacts with ESR1 and LATS1. Expressed in the endometrium during decidualization. Expression is down-regulated in preeclampsia decidual tissues.

The protein localises to the nucleus. It is found in the nucleolus. It functions in the pathway protein modification; protein ubiquitination. Functionally, part of the small subunit (SSU) processome, first precursor of the small eukaryotic ribosomal subunit. During the assembly of the SSU processome in the nucleolus, many ribosome biogenesis factors, an RNA chaperone and ribosomal proteins associate with the nascent pre-rRNA and work in concert to generate RNA folding, modifications, rearrangements and cleavage as well as targeted degradation of pre-ribosomal RNA by the RNA exosome. Participates in the 18S rRNA processing in growing oocytes, being essential for oocyte nonsurrounded nucleolus (NSN) to surrounded nucleolus (SN) transition. Its function is as follows. Substrate-recognition component of a DCX (DDB1-CUL4-X-box) E3 ubiquitin-protein ligase complex that plays a key role in embryo preimplantation and is required for normal meiotic cycle progression in oocytes. Acts as a maternal factor that regulates oocyte and zygotic chromatin tightness during maternal to zygotic transition. Also involved in the transformation of the endometrium into the decidua, known as decidualization, providing a solid foundation for implantation of blastocysts. Recognizes the histone methyltransferases SUV39H1 and SUV39H2 and directs them to polyubiquitination and proteasomal degradation, which facilitates the H3K9me3 removal and early zygotic gene expression, essential steps for progressive genome reprogramming and the establishment of pluripotency during preimplantation embryonic development. Supports the spindle assembly and chromosome condensation during oocyte meiotic division by targeting the polyubiquitination and degradation of PTEN, a lipid phosphatase that inhibits PI3K pathway as well as oocyte growth and maturation. Targets PMP22 for polyubiquitination and proteasomal degradation. This chain is DDB1- and CUL4-associated factor 13, found in Homo sapiens (Human).